The following is a 168-amino-acid chain: Small ribosomal subunit protein uS5 (168 aa).

The S5 DRBM domain maps to 11 to 74 (YSEKVVKIDR…EAAKKHLVKI (64 aa)).

It belongs to the universal ribosomal protein uS5 family. As to quaternary structure, part of the 30S ribosomal subunit. Contacts proteins S4 and S8.

With S4 and S12 plays an important role in translational accuracy. Its function is as follows. Located at the back of the 30S subunit body where it stabilizes the conformation of the head with respect to the body. This is Small ribosomal subunit protein uS5 from Leptospira borgpetersenii serovar Hardjo-bovis (strain JB197).